The primary structure comprises 254 residues: Very-long-chain (3R)-3-hydroxyacyl-CoA dehydratase 2 (254 aa).

Positions 1–10 (MAAAAATAAT) are enriched in low complexity. The tract at residues 1-34 (MAAAAATAATKGNGGGSGRVGAGDSSGARKKKGP) is disordered. Position 2 is an N-acetylalanine (alanine 2). Residues 2–41 (AAAAATAATKGNGGGSGRVGAGDSSGARKKKGPGPVATAY) lie on the Cytoplasmic side of the membrane. Gly residues predominate over residues 12–21 (GNGGGSGRVG). Residues 42 to 60 (LVIYNVVMTAGWLVIAVGL) form a helical membrane-spanning segment. Topologically, residues 61–79 (VRAYLAKGSYHSLYYSIER) are lumenal. A helical membrane pass occupies residues 80 to 97 (PLKFFQTGALLEILHCAI). At 98–107 (GIVPSSVVLT) the chain is on the cytoplasmic side. The chain crosses the membrane as a helical span at residues 108 to 125 (SFQVMSRVFLIWAVTHSV). At 126–130 (KEVQS) the chain is on the lumenal side. The helical transmembrane segment at 131 to 146 (EDSVLLFVIAWTITEI) threads the bilayer. The Cytoplasmic segment spans residues 147-169 (IRYSFYTFSLLNHLPYIIKWARY). The helical transmembrane segment at 170-187 (TLFIVLYPMGVTGELLTI) threads the bilayer. Catalysis depends on residues tyrosine 176 and glutamate 183. Topologically, residues 188 to 217 (YAALPFVRQAGLYSISLPNKYNFSFDYHAF) are lumenal. A may be involved in interaction with TECR region spans residues 198–214 (GLYSISLPNKYNFSFDY). N-linked (GlcNAc...) asparagine glycosylation occurs at asparagine 209. The chain crosses the membrane as a helical span at residues 218-235 (LILIMISYIPLFPQLYFH). Residues 236-254 (MIHQRRKVLSHTEEHKKFE) lie on the Cytoplasmic side of the membrane.

This sequence belongs to the very long-chain fatty acids dehydratase HACD family. May interact with enzymes of the ELO family (including ELOVL1); with those enzymes that mediate condensation, the first of the four steps of the reaction cycle responsible for fatty acids elongation, may be part of a larger fatty acids elongase complex. Interacts with BCAP31. Interacts with TECR.

It localises to the endoplasmic reticulum membrane. The enzyme catalyses a very-long-chain (3R)-3-hydroxyacyl-CoA = a very-long-chain (2E)-enoyl-CoA + H2O. It catalyses the reaction (3R)-hydroxyhexadecanoyl-CoA = (2E)-hexadecenoyl-CoA + H2O. It carries out the reaction (3R)-hydroxyoctadecanoyl-CoA = (2E)-octadecenoyl-CoA + H2O. The catalysed reaction is (3R)-hydroxyeicosanoyl-CoA = (2E)-eicosenoyl-CoA + H2O. The enzyme catalyses (3R)-hydroxydocosanoyl-CoA = (2E)-docosenoyl-CoA + H2O. It catalyses the reaction (3R)-hydroxytetracosanoyl-CoA = (2E)-tetracosenoyl-CoA + H2O. It carries out the reaction (3R)-hydroxyhexacosanoyl-CoA = (2E)-hexacosenoyl-CoA + H2O. The protein operates within lipid metabolism; fatty acid biosynthesis. In terms of biological role, catalyzes the third of the very long-chain fatty acids (VLCFA) elongation four-step cycle (condensation, reduction, dehydration, and reduction). This endoplasmic reticulum-elongation process is characterized by the addition of two carbons to the lipid chain through each cycle. This enzyme catalyzes the dehydration of the 3-hydroxyacyl-CoA intermediate into trans-2,3-enoyl-CoA, within each cycle of elongation. Therefore, it participates in the production of various VLCFAs involved in multiple biological processes as precursors of membrane lipids and lipid mediators. The chain is Very-long-chain (3R)-3-hydroxyacyl-CoA dehydratase 2 from Mus musculus (Mouse).